We begin with the raw amino-acid sequence, 306 residues long: Ribonuclease Z (306 aa).

Residues His63, His65, Asp67, His68, His141, Asp211, and His269 each contribute to the Zn(2+) site. The active-site Proton acceptor is the Asp67.

It belongs to the RNase Z family. In terms of assembly, homodimer. The cofactor is Zn(2+).

It catalyses the reaction Endonucleolytic cleavage of RNA, removing extra 3' nucleotides from tRNA precursor, generating 3' termini of tRNAs. A 3'-hydroxy group is left at the tRNA terminus and a 5'-phosphoryl group is left at the trailer molecule.. Zinc phosphodiesterase, which displays some tRNA 3'-processing endonuclease activity. Probably involved in tRNA maturation, by removing a 3'-trailer from precursor tRNA. In Staphylococcus aureus (strain USA300), this protein is Ribonuclease Z.